Reading from the N-terminus, the 148-residue chain is 3-hydroxyacyl-[acyl-carrier-protein] dehydratase FabZ (148 aa).

His48 is an active-site residue.

This sequence belongs to the thioester dehydratase family. FabZ subfamily.

The protein localises to the cytoplasm. The catalysed reaction is a (3R)-hydroxyacyl-[ACP] = a (2E)-enoyl-[ACP] + H2O. In terms of biological role, involved in unsaturated fatty acids biosynthesis. Catalyzes the dehydration of short chain beta-hydroxyacyl-ACPs and long chain saturated and unsaturated beta-hydroxyacyl-ACPs. The polypeptide is 3-hydroxyacyl-[acyl-carrier-protein] dehydratase FabZ (Campylobacter concisus (strain 13826)).